Consider the following 611-residue polypeptide: Glutamine--fructose-6-phosphate aminotransferase [isomerizing] (611 aa).

C2 functions as the Nucleophile; for GATase activity in the catalytic mechanism. The region spanning 2-219 (CGIVGAIAER…EGDIAEIRRD (218 aa)) is the Glutamine amidotransferase type-2 domain. SIS domains are found at residues 287–427 (AAEL…VQKR) and 460–601 (VSEL…VDQP). K606 acts as the For Fru-6P isomerization activity in catalysis.

In terms of assembly, homodimer.

The protein resides in the cytoplasm. The enzyme catalyses D-fructose 6-phosphate + L-glutamine = D-glucosamine 6-phosphate + L-glutamate. Catalyzes the first step in hexosamine metabolism, converting fructose-6P into glucosamine-6P using glutamine as a nitrogen source. The sequence is that of Glutamine--fructose-6-phosphate aminotransferase [isomerizing] from Pseudomonas aeruginosa (strain ATCC 15692 / DSM 22644 / CIP 104116 / JCM 14847 / LMG 12228 / 1C / PRS 101 / PAO1).